A 396-amino-acid chain; its full sequence is DNA replication and repair protein RecF (396 aa).

ATP is bound at residue 30-37 (GANGSGKT).

The protein belongs to the RecF family.

It is found in the cytoplasm. The RecF protein is involved in DNA metabolism; it is required for DNA replication and normal SOS inducibility. RecF binds preferentially to single-stranded, linear DNA. It also seems to bind ATP. This is DNA replication and repair protein RecF from Thermomicrobium roseum (strain ATCC 27502 / DSM 5159 / P-2).